The sequence spans 459 residues: tRNA modification GTPase MnmE (459 aa).

Residues Arg-29, Glu-86, and Lys-125 each coordinate (6S)-5-formyl-5,6,7,8-tetrahydrofolate. The 162-residue stretch at 221–382 (GMNVVIAGRP…LTEHLKAVMG (162 aa)) folds into the TrmE-type G domain. Asn-231 lines the K(+) pocket. GTP-binding positions include 231-236 (NAGKSS), 250-256 (TNIEGTT), and 275-278 (DTAG). Ser-235 is a binding site for Mg(2+). K(+)-binding residues include Thr-250, Ile-252, and Thr-255. Thr-256 is a binding site for Mg(2+). Lys-459 contributes to the (6S)-5-formyl-5,6,7,8-tetrahydrofolate binding site.

Belongs to the TRAFAC class TrmE-Era-EngA-EngB-Septin-like GTPase superfamily. TrmE GTPase family. Homodimer. Heterotetramer of two MnmE and two MnmG subunits. It depends on K(+) as a cofactor.

The protein resides in the cytoplasm. Exhibits a very high intrinsic GTPase hydrolysis rate. Involved in the addition of a carboxymethylaminomethyl (cmnm) group at the wobble position (U34) of certain tRNAs, forming tRNA-cmnm(5)s(2)U34. This is tRNA modification GTPase MnmE from Marinomonas sp. (strain MWYL1).